The chain runs to 87 residues: uncharacterized protein (87 aa).

A helical membrane pass occupies residues 44–64 (DALYLAGSTIFTIVTTLVAWF).

Belongs to the SPP1 holin family.

The protein resides in the membrane. This is an uncharacterized protein from Bacillus licheniformis.